The following is a 407-amino-acid chain: Peptidase T (407 aa).

H82 provides a ligand contact to Zn(2+). The active site involves D84. D143 is a binding site for Zn(2+). Catalysis depends on E177, which acts as the Proton acceptor. 3 residues coordinate Zn(2+): E178, D200, and H382.

It belongs to the peptidase M20B family. The cofactor is Zn(2+).

The protein localises to the cytoplasm. The enzyme catalyses Release of the N-terminal residue from a tripeptide.. Cleaves the N-terminal amino acid of tripeptides. The polypeptide is Peptidase T (Streptococcus uberis (strain ATCC BAA-854 / 0140J)).